The chain runs to 235 residues: Large ribosomal subunit protein uL1 (235 aa).

It belongs to the universal ribosomal protein uL1 family. Part of the 50S ribosomal subunit.

Functionally, binds directly to 23S rRNA. The L1 stalk is quite mobile in the ribosome, and is involved in E site tRNA release. In terms of biological role, protein L1 is also a translational repressor protein, it controls the translation of the L11 operon by binding to its mRNA. The protein is Large ribosomal subunit protein uL1 of Nitratidesulfovibrio vulgaris (strain ATCC 29579 / DSM 644 / CCUG 34227 / NCIMB 8303 / VKM B-1760 / Hildenborough) (Desulfovibrio vulgaris).